The primary structure comprises 263 residues: Virulence plasmid protein pGP6-D-related protein (263 aa).

Belongs to the UPF0137 (pGP6-D) family.

The polypeptide is Virulence plasmid protein pGP6-D-related protein (Chlamydia trachomatis serovar D (strain ATCC VR-885 / DSM 19411 / UW-3/Cx)).